Reading from the N-terminus, the 309-residue chain is Dihydroorotate dehydrogenase B (NAD(+)), catalytic subunit (309 aa).

FMN contacts are provided by residues serine 21 and 45–46; that span reads KA. Substrate contacts are provided by residues lysine 45 and 69–73; that span reads NAIGL. Residues asparagine 99 and asparagine 127 each coordinate FMN. Residue asparagine 127 coordinates substrate. The Nucleophile role is filled by cysteine 130. FMN contacts are provided by lysine 165 and isoleucine 191. Substrate is bound at residue 192–193; that stretch reads NT. Residues glycine 217, 243–244, and 265–266 each bind FMN; these read GG and GT.

This sequence belongs to the dihydroorotate dehydrogenase family. Type 1 subfamily. Heterotetramer of 2 PyrK and 2 PyrD type B subunits. FMN serves as cofactor.

It is found in the cytoplasm. It catalyses the reaction (S)-dihydroorotate + NAD(+) = orotate + NADH + H(+). It participates in pyrimidine metabolism; UMP biosynthesis via de novo pathway; orotate from (S)-dihydroorotate (NAD(+) route): step 1/1. Functionally, catalyzes the conversion of dihydroorotate to orotate with NAD(+) as electron acceptor. This chain is Dihydroorotate dehydrogenase B (NAD(+)), catalytic subunit (pyrD), found in Bacillus thuringiensis (strain Al Hakam).